The chain runs to 429 residues: Serine hydroxymethyltransferase (429 aa).

Residues Leu-126 and 130 to 132 each bind (6S)-5,6,7,8-tetrahydrofolate; that span reads GHL. The residue at position 235 (Lys-235) is an N6-(pyridoxal phosphate)lysine.

It belongs to the SHMT family. In terms of assembly, homodimer. Pyridoxal 5'-phosphate serves as cofactor.

It is found in the cytoplasm. It carries out the reaction (6R)-5,10-methylene-5,6,7,8-tetrahydrofolate + glycine + H2O = (6S)-5,6,7,8-tetrahydrofolate + L-serine. It functions in the pathway one-carbon metabolism; tetrahydrofolate interconversion. The protein operates within amino-acid biosynthesis; glycine biosynthesis; glycine from L-serine: step 1/1. Functionally, catalyzes the reversible interconversion of serine and glycine with tetrahydrofolate (THF) serving as the one-carbon carrier. This reaction serves as the major source of one-carbon groups required for the biosynthesis of purines, thymidylate, methionine, and other important biomolecules. Also exhibits THF-independent aldolase activity toward beta-hydroxyamino acids, producing glycine and aldehydes, via a retro-aldol mechanism. This Zymomonas mobilis subsp. mobilis (strain ATCC 31821 / ZM4 / CP4) protein is Serine hydroxymethyltransferase.